We begin with the raw amino-acid sequence, 188 residues long: Protein-arginine kinase activator protein (188 aa).

Short sequence motifs (CXXC metal binding motif) lie at residues 3–6 (CENC), 29–32 (CQTC), 87–90 (CPSC), and 105–108 (CANC). A UVR domain is found at 145–180 (KRKIEEKNEYLKKLIEIQDFEEAAIVRDEIKALKAE).

In terms of assembly, interacts with McsB and CtsR; the CXXC motifs are needed for the binding.

In terms of biological role, activates the phosphorylation activity of the protein-arginine kinase McsB. May function as an important molecule for oxidative tolerance in various types of stress including that of heavy metals. Binds to Cu(2+), Zn(2+), Co(2+) and Cd(2+) via its CXXC metal binding motifs. This Staphylococcus aureus (strain NCTC 8325 / PS 47) protein is Protein-arginine kinase activator protein.